The following is an 871-amino-acid chain: Translation initiation factor IF-2 (871 aa).

2 disordered regions span residues 60-101 (KKNI…QEVK) and 184-203 (ESLK…KKES). The segment covering 61–72 (KNIKTPTAKKPK) has biased composition (basic residues). Positions 73–101 (KENIKEQEKLNESEKKEPKKEEKLKQEVK) are enriched in basic and acidic residues. Positions 370 to 537 (TRAPVITIMG…IVLLQADILE (168 aa)) constitute a tr-type G domain. The G1 stretch occupies residues 379–386 (GHVDHGKT). Residue 379-386 (GHVDHGKT) participates in GTP binding. The tract at residues 404–408 (GITQH) is G2. The G3 stretch occupies residues 425–428 (DTPG). Residues 425–429 (DTPGH) and 479–482 (NKMD) contribute to the GTP site. The G4 stretch occupies residues 479 to 482 (NKMD). The tract at residues 515 to 517 (SAK) is G5.

It belongs to the TRAFAC class translation factor GTPase superfamily. Classic translation factor GTPase family. IF-2 subfamily.

It is found in the cytoplasm. Functionally, one of the essential components for the initiation of protein synthesis. Protects formylmethionyl-tRNA from spontaneous hydrolysis and promotes its binding to the 30S ribosomal subunits. Also involved in the hydrolysis of GTP during the formation of the 70S ribosomal complex. In Campylobacter jejuni subsp. jejuni serotype O:23/36 (strain 81-176), this protein is Translation initiation factor IF-2.